A 242-amino-acid chain; its full sequence is Protein ABHD14A (242 aa).

The chain crosses the membrane as a helical; Signal-anchor for type II membrane protein span at residues 6–26; it reads AALLGLGLLLMFLLYMGLPGP. N38 carries N-linked (GlcNAc...) asparagine glycosylation. Active-site charge relay system residues include S142, D193, and H220.

The protein belongs to the AB hydrolase superfamily. ABHD14 family.

It localises to the cytoplasm. The protein resides in the membrane. Its function is as follows. Possible role in granule neuron development. This Rattus norvegicus (Rat) protein is Protein ABHD14A.